Consider the following 178-residue polypeptide: Redox-sensing transcriptional repressor Rex (178 aa).

59–64 (GVGNMG) is a binding site for NAD(+).

This sequence belongs to the transcriptional regulatory Rex family. As to quaternary structure, homodimer.

It localises to the cytoplasm. Modulates transcription in response to changes in cellular NADH/NAD(+) redox state. The sequence is that of Redox-sensing transcriptional repressor Rex from Streptococcus suis.